The following is a 470-amino-acid chain: Alpha-galactosidase (470 aa).

Positions 1-18 (MFSLLLLTSTALVETALG) are cleaved as a signal peptide. An intrachain disulfide couples C42 to C74. N-linked (GlcNAc...) asparagine glycosylation occurs at N43. 2 residues coordinate substrate: D72 and D73. N-linked (GlcNAc...) asparagine glycosylation is present at N82. C121 and C151 are joined by a disulfide. K147 serves as a coordination point for substrate. D149 (nucleophile) is an active-site residue. N175 carries N-linked (GlcNAc...) asparagine glycosylation. Residue R205 participates in substrate binding. D209 serves as the catalytic Proton donor. 2 cysteine pairs are disulfide-bonded: C221–C237 and C223–C230. Residue Q251 participates in substrate binding. N-linked (GlcNAc...) asparagine glycosylation is found at N270, N388, N413, N422, N435, and N454.

It belongs to the glycosyl hydrolase 27 family. Homotetramer.

It is found in the secreted. The catalysed reaction is Hydrolysis of terminal, non-reducing alpha-D-galactose residues in alpha-D-galactosides, including galactose oligosaccharides, galactomannans and galactolipids.. This Zygotorulaspora mrakii (Zygosaccharomyces mrakii) protein is Alpha-galactosidase (MEL).